A 151-amino-acid polypeptide reads, in one-letter code: 3-hydroxyacyl-[acyl-carrier-protein] dehydratase FabZ (151 aa).

H54 is an active-site residue.

This sequence belongs to the thioester dehydratase family. FabZ subfamily.

Its subcellular location is the cytoplasm. The catalysed reaction is a (3R)-hydroxyacyl-[ACP] = a (2E)-enoyl-[ACP] + H2O. In terms of biological role, involved in unsaturated fatty acids biosynthesis. Catalyzes the dehydration of short chain beta-hydroxyacyl-ACPs and long chain saturated and unsaturated beta-hydroxyacyl-ACPs. The protein is 3-hydroxyacyl-[acyl-carrier-protein] dehydratase FabZ of Erwinia tasmaniensis (strain DSM 17950 / CFBP 7177 / CIP 109463 / NCPPB 4357 / Et1/99).